We begin with the raw amino-acid sequence, 176 residues long: Large ribosomal subunit protein uL22 (176 aa).

The segment at 113–176 (VVESRPSKDQ…ETSEAKGGSD (64 aa)) is disordered. The segment covering 136-152 (SKAAATAPAKKSSASKA) has biased composition (low complexity). The span at 159 to 176 (TKAESKTSETSEAKGGSD) shows a compositional bias: basic and acidic residues.

The protein belongs to the universal ribosomal protein uL22 family. In terms of assembly, part of the 50S ribosomal subunit.

This protein binds specifically to 23S rRNA; its binding is stimulated by other ribosomal proteins, e.g. L4, L17, and L20. It is important during the early stages of 50S assembly. It makes multiple contacts with different domains of the 23S rRNA in the assembled 50S subunit and ribosome. In terms of biological role, the globular domain of the protein is located near the polypeptide exit tunnel on the outside of the subunit, while an extended beta-hairpin is found that lines the wall of the exit tunnel in the center of the 70S ribosome. The chain is Large ribosomal subunit protein uL22 from Mycobacterium marinum (strain ATCC BAA-535 / M).